The sequence spans 196 residues: Holliday junction branch migration complex subunit RuvA (196 aa).

Residues 1 to 61 form a domain I region; sequence MYEYFEGIVT…DTGITLYGFQ (61 aa). The segment at 62–140 is domain II; it reads SEDDKGLFLK…DYVARLDRQD (79 aa). The segment at 141-149 is flexible linker; sequence EEQGNISPA. Residues 149–196 are domain III; it reads ALNDALLALIALGYTQKEVDRITTKLEEVNADTADQYIKKGLALLLKK.

Belongs to the RuvA family. In terms of assembly, homotetramer. Forms an RuvA(8)-RuvB(12)-Holliday junction (HJ) complex. HJ DNA is sandwiched between 2 RuvA tetramers; dsDNA enters through RuvA and exits via RuvB. An RuvB hexamer assembles on each DNA strand where it exits the tetramer. Each RuvB hexamer is contacted by two RuvA subunits (via domain III) on 2 adjacent RuvB subunits; this complex drives branch migration. In the full resolvosome a probable DNA-RuvA(4)-RuvB(12)-RuvC(2) complex forms which resolves the HJ.

It localises to the cytoplasm. Functionally, the RuvA-RuvB-RuvC complex processes Holliday junction (HJ) DNA during genetic recombination and DNA repair, while the RuvA-RuvB complex plays an important role in the rescue of blocked DNA replication forks via replication fork reversal (RFR). RuvA specifically binds to HJ cruciform DNA, conferring on it an open structure. The RuvB hexamer acts as an ATP-dependent pump, pulling dsDNA into and through the RuvAB complex. HJ branch migration allows RuvC to scan DNA until it finds its consensus sequence, where it cleaves and resolves the cruciform DNA. This Lactobacillus helveticus (strain DPC 4571) protein is Holliday junction branch migration complex subunit RuvA.